A 144-amino-acid polypeptide reads, in one-letter code: Transcriptional regulator MraZ (144 aa).

2 consecutive SpoVT-AbrB domains span residues 6–48 and 77–120; these read TYTP…PTDV and ADEG…DPVR.

Belongs to the MraZ family. In terms of assembly, forms oligomers.

Its subcellular location is the cytoplasm. The protein resides in the nucleoid. The polypeptide is Transcriptional regulator MraZ (Nocardioides sp. (strain ATCC BAA-499 / JS614)).